The following is a 67-amino-acid chain: Probable Sec-independent protein translocase protein TatE (67 aa).

The helical transmembrane segment at 4–21 threads the bilayer; it reads ISITKLLVVAALVVLLFG. The interval 46 to 67 is disordered; that stretch reads EDAGAKKEAGGDIQAEKLSHKE.

The protein belongs to the TatA/E family. TatE subfamily.

It localises to the cell inner membrane. Part of the twin-arginine translocation (Tat) system that transports large folded proteins containing a characteristic twin-arginine motif in their signal peptide across membranes. TatE shares overlapping functions with TatA. This chain is Probable Sec-independent protein translocase protein TatE, found in Citrobacter koseri (strain ATCC BAA-895 / CDC 4225-83 / SGSC4696).